A 289-amino-acid polypeptide reads, in one-letter code: ATP synthase subunit a (289 aa).

The next 7 helical transmembrane spans lie at 41-61, 101-121, 129-149, 166-186, 189-209, 222-242, and 244-264; these read KATALTIFAALFVGVIFWLGF, YLLVLFSFVLVSNVLAIIPAA, IAVPMVLAVVTWVMFIYAGIK, TAPLAIRLLLGPIEILSTLIV, FTLAIRLFANMFAGHLLLLVF, FVFGVASLLVAIVLTAFELVI, and ALQAYIITILTAAYIGGAMAH.

This sequence belongs to the ATPase A chain family. As to quaternary structure, F-type ATPases have 2 components, CF(1) - the catalytic core - and CF(0) - the membrane proton channel. CF(1) has five subunits: alpha(3), beta(3), gamma(1), delta(1), epsilon(1). CF(0) has three main subunits: a(1), b(2) and c(9-12). The alpha and beta chains form an alternating ring which encloses part of the gamma chain. CF(1) is attached to CF(0) by a central stalk formed by the gamma and epsilon chains, while a peripheral stalk is formed by the delta and b chains.

The protein localises to the cell membrane. Key component of the proton channel; it plays a direct role in the translocation of protons across the membrane. This Frankia alni (strain DSM 45986 / CECT 9034 / ACN14a) protein is ATP synthase subunit a.